A 128-amino-acid chain; its full sequence is Large ribosomal subunit protein bL20c (128 aa).

The protein belongs to the bacterial ribosomal protein bL20 family.

It is found in the plastid. The protein localises to the chloroplast. Functionally, binds directly to 23S ribosomal RNA and is necessary for the in vitro assembly process of the 50S ribosomal subunit. It is not involved in the protein synthesizing functions of that subunit. This is Large ribosomal subunit protein bL20c from Trachelium caeruleum (Blue throatwort).